The following is a 117-amino-acid chain: Putative membrane protein insertion efficiency factor (117 aa).

Belongs to the UPF0161 family.

The protein localises to the cell inner membrane. Could be involved in insertion of integral membrane proteins into the membrane. The chain is Putative membrane protein insertion efficiency factor from Helicobacter pylori (strain ATCC 700392 / 26695) (Campylobacter pylori).